The following is a 327-amino-acid chain: rRNA 2'-O-methyltransferase fibrillarin (327 aa).

The interval 1-93 is disordered; sequence MKPGFSPRGG…RGNQSGKNVM (93 aa). Gly residues predominate over residues 7–80; that stretch reads PRGGGFGGRG…GGGRGRGGGR (74 aa). An asymmetric dimethylarginine mark is found at R8, R15, R21, R24, R28, and R31. Residues K90, K108, and K115 each participate in a glycyl lysine isopeptide (Lys-Gly) (interchain with G-Cter in SUMO2) cross-link. K108 carries the N6-acetyllysine modification. Residue S122 is modified to Phosphoserine. The residue at position 127 (K127) is an N6-acetyllysine. Phosphoserine occurs at positions 130 and 132. Glycyl lysine isopeptide (Lys-Gly) (interchain with G-Cter in SUMO2) cross-links involve residues K137, K149, and K164. Residues 178–179 and 197–198 each bind S-adenosyl-L-methionine; these read TT and EF. Residues K211 and K212 each carry the N6-acetyllysine modification. Residues 222–223 and 242–245 contribute to the S-adenosyl-L-methionine site; these read DA and DVAQ.

This sequence belongs to the methyltransferase superfamily. Fibrillarin family. Component of box C/D small nucleolar ribonucleoprotein (snoRNP) particles that contain SNU13, FBL, NOP5 and NOP56, plus a guide RNA. It is associated with the U3, U8, U13, X and Y small nuclear RNAs. Component of several ribosomal and nucleolar protein complexes. Part of the small subunit (SSU) processome, composed of more than 70 proteins and the RNA chaperone small nucleolar RNA (snoRNA) U3. Interacts with PRMT5 and UTP20. Interacts with DDX5 and C1QBP. Interacts with NOL11. Interacts with PIH1D1. Interacts with RRP1B. Interacts with NOLC1. Interacts with SDE2. Interacts with NOP2 and NOP56. Ubiquitinated. Ubiquitination leads to proteasomal degradation. Deubiquitinated by USP36. In terms of processing, by homology to other fibrillarins, some or all of the N-terminal domain arginines are modified to asymmetric dimethylarginine (DMA). Post-translationally, acetylated by CREBBP/CBP, preventing methylation of 'Gln-105' of histone H2A (H2AQ104me), without affecting rRNA methylation. Deacetylation by SIRT7 restores methylation of 'Gln-105' of histone H2A (H2AQ104me).

It is found in the nucleus. The protein localises to the nucleolus. The protein resides in the nucleoplasm. The catalysed reaction is L-glutaminyl-[histone H2A] + S-adenosyl-L-methionine = N(5)-methyl-L-glutaminyl-[histone H2A] + S-adenosyl-L-homocysteine + H(+). The enzyme catalyses a ribonucleotide in rRNA + S-adenosyl-L-methionine = a 2'-O-methylribonucleotide in rRNA + S-adenosyl-L-homocysteine + H(+). It catalyses the reaction a ribonucleotide in U6 snRNA + S-adenosyl-L-methionine = a 2'-O-methylribonucleotide in U6 snRNA + S-adenosyl-L-homocysteine + H(+). In terms of biological role, S-adenosyl-L-methionine-dependent methyltransferase that has the ability to methylate both RNAs and proteins. Involved in pre-rRNA processing by catalyzing the site-specific 2'-hydroxyl methylation of ribose moieties in pre-ribosomal RNA. Site specificity is provided by a guide RNA that base pairs with the substrate. Methylation occurs at a characteristic distance from the sequence involved in base pairing with the guide RNA. Probably catalyzes 2'-O-methylation of U6 snRNAs in box C/D RNP complexes. U6 snRNA 2'-O-methylation is required for mRNA splicing fidelity. Also acts as a protein methyltransferase by mediating methylation of 'Gln-105' of histone H2A (H2AQ104me), a modification that impairs binding of the FACT complex and is specifically present at 35S ribosomal DNA locus. Part of the small subunit (SSU) processome, first precursor of the small eukaryotic ribosomal subunit. During the assembly of the SSU processome in the nucleolus, many ribosome biogenesis factors, an RNA chaperone and ribosomal proteins associate with the nascent pre-rRNA and work in concert to generate RNA folding, modifications, rearrangements and cleavage as well as targeted degradation of pre-ribosomal RNA by the RNA exosome. The sequence is that of rRNA 2'-O-methyltransferase fibrillarin (Fbl) from Rattus norvegicus (Rat).